Here is a 427-residue protein sequence, read N- to C-terminus: Histidinol dehydrogenase (427 aa).

NAD(+) contacts are provided by tyrosine 125, glutamine 186, and asparagine 209. Substrate is bound by residues serine 234, glutamine 256, and histidine 259. Glutamine 256 and histidine 259 together coordinate Zn(2+). Catalysis depends on proton acceptor residues glutamate 325 and histidine 326. Residues histidine 326, aspartate 359, glutamate 413, and histidine 419 each contribute to the substrate site. Aspartate 359 serves as a coordination point for Zn(2+). Position 419 (histidine 419) interacts with Zn(2+).

It belongs to the histidinol dehydrogenase family. Zn(2+) is required as a cofactor.

It catalyses the reaction L-histidinol + 2 NAD(+) + H2O = L-histidine + 2 NADH + 3 H(+). It participates in amino-acid biosynthesis; L-histidine biosynthesis; L-histidine from 5-phospho-alpha-D-ribose 1-diphosphate: step 9/9. Catalyzes the sequential NAD-dependent oxidations of L-histidinol to L-histidinaldehyde and then to L-histidine. The protein is Histidinol dehydrogenase of Leptospira interrogans serogroup Icterohaemorrhagiae serovar Lai (strain 56601).